A 156-amino-acid polypeptide reads, in one-letter code: Small ribosomal subunit protein uS7 (156 aa).

Belongs to the universal ribosomal protein uS7 family. In terms of assembly, part of the 30S ribosomal subunit. Contacts proteins S9 and S11.

Its function is as follows. One of the primary rRNA binding proteins, it binds directly to 16S rRNA where it nucleates assembly of the head domain of the 30S subunit. Is located at the subunit interface close to the decoding center, probably blocks exit of the E-site tRNA. The sequence is that of Small ribosomal subunit protein uS7 from Natranaerobius thermophilus (strain ATCC BAA-1301 / DSM 18059 / JW/NM-WN-LF).